The chain runs to 130 residues: Small ribosomal subunit protein uS9 (130 aa).

Belongs to the universal ribosomal protein uS9 family.

This is Small ribosomal subunit protein uS9 from Streptococcus equi subsp. zooepidemicus (strain H70).